Reading from the N-terminus, the 259-residue chain is Global transcriptional regulator CodY (259 aa).

The GAF domain stretch occupies residues 1-155 (MELLAKTRKL…SSTVVGMEIL (155 aa)). The H-T-H motif DNA-binding region spans 203–222 (ASKIADRVGITRSVIVNALR). Ser-215 carries the phosphoserine modification.

Belongs to the CodY family.

It is found in the cytoplasm. Its function is as follows. DNA-binding global transcriptional regulator which is involved in the adaptive response to starvation and acts by directly or indirectly controlling the expression of numerous genes in response to nutrient availability. During rapid exponential growth, CodY is highly active and represses genes whose products allow adaptation to nutrient depletion. In Bacillus cereus (strain ATCC 10987 / NRS 248), this protein is Global transcriptional regulator CodY.